The following is a 181-amino-acid chain: Large ribosomal subunit protein uL5 (181 aa).

This sequence belongs to the universal ribosomal protein uL5 family. Part of the 50S ribosomal subunit; part of the 5S rRNA/L5/L18/L25 subcomplex. Contacts the 5S rRNA and the P site tRNA. Forms a bridge to the 30S subunit in the 70S ribosome.

In terms of biological role, this is one of the proteins that bind and probably mediate the attachment of the 5S RNA into the large ribosomal subunit, where it forms part of the central protuberance. In the 70S ribosome it contacts protein S13 of the 30S subunit (bridge B1b), connecting the 2 subunits; this bridge is implicated in subunit movement. Contacts the P site tRNA; the 5S rRNA and some of its associated proteins might help stabilize positioning of ribosome-bound tRNAs. This Rickettsia canadensis (strain McKiel) protein is Large ribosomal subunit protein uL5.